The chain runs to 626 residues: Methanol dehydrogenase [cytochrome c] subunit 1 (626 aa).

Positions 1-27 are cleaved as a signal peptide; it reads MSRFVTSVSALAMLALAPAALSSVAYA. An intrachain disulfide couples Cys-130 to Cys-131. Positions 204 and 288 each coordinate Ca(2+). Catalysis depends on Asp-330, which acts as the Proton acceptor. A disulfide bond links Cys-413 and Cys-442.

It belongs to the bacterial PQQ dehydrogenase family. As to quaternary structure, heterotetramer composed of 2 alpha and 2 beta subunits. Pyrroloquinoline quinone serves as cofactor. Requires Ca(2+) as cofactor.

Its subcellular location is the cell inner membrane. It catalyses the reaction 2 Fe(III)-[cytochrome cL] + a primary alcohol = 2 Fe(II)-[cytochrome cL] + an aldehyde + 2 H(+). In terms of biological role, catalyzes the oxidation of primary alcohols including methanol. The protein is Methanol dehydrogenase [cytochrome c] subunit 1 (moxF) of Methylobacterium organophilum.